A 442-amino-acid polypeptide reads, in one-letter code: Vacuolar zinc transporter ZRC1 (442 aa).

Topologically, residues M1–R8 are cytoplasmic. The chain crosses the membrane as a helical span at residues I9–M29. At S30–S32 the chain is on the vacuolar side. A helical transmembrane segment spans residues L33–L53. At W54–A75 the chain is on the cytoplasmic side. Residues E76–I96 form a helical membrane-spanning segment. The Vacuolar segment spans residues E97–R112. Residues L113–H133 form a helical membrane-spanning segment. Topologically, residues D134 to V235 are cytoplasmic. 3 consecutive short sequence motifs (histidine repeat) follow at residues H141–H145, H163–H167, and H216–H220. 2 disordered regions span residues H141–L170 and Q208–H227. Residues E149–L170 are compositionally biased toward polar residues. The segment covering N212–K224 has biased composition (basic and acidic residues). A helical membrane pass occupies residues F236–I256. At W257–Y265 the chain is on the vacuolar side. Residues Y266–L286 traverse the membrane as a helical segment. Topologically, residues S287–L442 are cytoplasmic. K357 is covalently cross-linked (Glycyl lysine isopeptide (Lys-Gly) (interchain with G-Cter in ubiquitin)). Residues S387, S393, and S397 each carry the phosphoserine modification. The tract at residues G391–Y419 is disordered.

Belongs to the cation diffusion facilitator (CDF) transporter (TC 2.A.4) family. SLC30A subfamily.

The protein resides in the vacuole membrane. The catalysed reaction is Zn(2+)(in) = Zn(2+)(out). In terms of biological role, vacuolar transporter that regulates zinc homeostasis by mediating zinc transport and storage into the vacuole. ZRC1 senses zinc availability in the cytosol, which might be performed through the histidine repeat motifs, and transports zinc from the cytosol to the vacuole if zinc in cytosol is abundant, conferring resistance to zinc toxicity. Plays a role in resistance to zinc shock resulting from sudden influx of zinc into cytoplasm when ZRT1 and ZRT2 are induced in response to zinc depletion. This Saccharomyces cerevisiae (strain ATCC 204508 / S288c) (Baker's yeast) protein is Vacuolar zinc transporter ZRC1.